Here is a 362-residue protein sequence, read N- to C-terminus: Putative integrase ORF3 (362 aa).

In terms of domain architecture, Integrase catalytic spans 179-359; the sequence is YEVKEIGLLQ…TPFNFLNSLS (181 aa). Mg(2+) contacts are provided by aspartate 190 and aspartate 256.

Belongs to the plectrovirus integrase ORF3 family.

This protein may encode an integrase, which is necessary for integration of the viral DNA into host genome. The chain is Putative integrase ORF3 from Spiroplasma melliferum (SpV1).